A 172-amino-acid polypeptide reads, in one-letter code: Pre-intermoult gene 1 protein (172 aa).

The signal sequence occupies residues 1-22 (MKLTKLWLLFVCLGLFVTLVVS). Acidic residues predominate over residues 25–45 (TDSDADSDSSADSDSSADSDE). Positions 25–172 (TDSDADSDSS…RRNNNSRRRG (148 aa)) are disordered. A run of 3 repeats spans residues 27–32 (SDADSD), 33–38 (SSADSD), and 39–44 (SSADSD). The segment at 27-44 (SDADSDSSADSDSSADSD) is 3 X 6 AA tandem repeats of S-S-A-D-S-D. Low complexity predominate over residues 55–77 (TSTTESSATNSSGSSDDASGSSS). The segment covering 78–95 (DVDDGSDDDTDSGSDTDY) has biased composition (acidic residues). Over residues 104 to 172 (VKKRANRKKA…RRNNNSRRRG (69 aa)) the composition is skewed to basic residues.

Low expression in first to third instar larvae salivary glands.

This Drosophila melanogaster (Fruit fly) protein is Pre-intermoult gene 1 protein (Pig1).